Consider the following 147-residue polypeptide: Large ribosomal subunit protein uL22 (147 aa).

It belongs to the universal ribosomal protein uL22 family. As to quaternary structure, part of the 50S ribosomal subunit.

In terms of biological role, this protein binds specifically to 23S rRNA; its binding is stimulated by other ribosomal proteins, e.g. L4, L17, and L20. It is important during the early stages of 50S assembly. It makes multiple contacts with different domains of the 23S rRNA in the assembled 50S subunit and ribosome. Functionally, the globular domain of the protein is located near the polypeptide exit tunnel on the outside of the subunit, while an extended beta-hairpin is found that lines the wall of the exit tunnel in the center of the 70S ribosome. In Fervidobacterium nodosum (strain ATCC 35602 / DSM 5306 / Rt17-B1), this protein is Large ribosomal subunit protein uL22.